Reading from the N-terminus, the 286-residue chain is Homoserine kinase (286 aa).

78-88 is an ATP binding site; that stretch reads PLARGLGSSSS.

The protein belongs to the GHMP kinase family. Homoserine kinase subfamily.

It is found in the cytoplasm. The catalysed reaction is L-homoserine + ATP = O-phospho-L-homoserine + ADP + H(+). It functions in the pathway amino-acid biosynthesis; L-threonine biosynthesis; L-threonine from L-aspartate: step 4/5. Catalyzes the ATP-dependent phosphorylation of L-homoserine to L-homoserine phosphate. The sequence is that of Homoserine kinase from Streptococcus equi subsp. equi (strain 4047).